We begin with the raw amino-acid sequence, 772 residues long: Acyl-homoserine lactone acylase PvdQ (772 aa).

Residues 1 to 28 (MPVFPFCRPMTCAGLAAALVAFSVGVQA) form the signal peptide. The propeptide at 199–220 (AQSSAGFASALARQERFAAERG) is spacer peptide. Residue S221 is the Nucleophile of the active site.

The protein belongs to the peptidase S45 family. In terms of assembly, heterodimer of an alpha subunit and a beta subunit processed from the same precursor.

It localises to the periplasm. It catalyses the reaction an N-acyl-L-homoserine lactone + H2O = L-homoserine lactone + a carboxylate. Functionally, catalyzes the deacylation of acyl-homoserine lactone (AHL or acyl-HSL), releasing homoserine lactone (HSL) and the corresponding fatty acid. Possesses a specificity for the degradation of long-chain acyl-HSLs (side chains of 11 to 14 carbons in length). This Pseudomonas putida (strain ATCC 47054 / DSM 6125 / CFBP 8728 / NCIMB 11950 / KT2440) protein is Acyl-homoserine lactone acylase PvdQ (pvdQ).